A 134-amino-acid chain; its full sequence is Transcription antitermination protein NusB (134 aa).

The protein belongs to the NusB family.

In terms of biological role, involved in transcription antitermination. Required for transcription of ribosomal RNA (rRNA) genes. Binds specifically to the boxA antiterminator sequence of the ribosomal RNA (rrn) operons. The sequence is that of Transcription antitermination protein NusB from Shewanella sediminis (strain HAW-EB3).